A 78-amino-acid polypeptide reads, in one-letter code: RNA-binding protein KhpA (78 aa).

The region spanning 29-78 (TIIYELSVAKPDIGKIIGKEGRTIKAIRTLLVSVASRNNVRVSLEIMEEK) is the KH domain.

Belongs to the KhpA RNA-binding protein family.

The protein resides in the cytoplasm. A probable RNA-binding protein. The polypeptide is RNA-binding protein KhpA (Chlamydia pneumoniae (Chlamydophila pneumoniae)).